Consider the following 1468-residue polypeptide: Neuropathy target esterase sws (1468 aa).

Residues 1-34 are Lumenal-facing; it reads MDVLEMLRASASGSYNTIFSDAWCQYVSKQITAT. Residues 35-55 traverse the membrane as a helical segment; sequence VYMYCALVMMSLLFIAWFLYF. Topologically, residues 56–1468 are cytoplasmic; the sequence is KRMARLRLRD…RSSPNNETKN (1413 aa). 174-301 serves as a coordination point for a nucleoside 3',5'-cyclic phosphate; sequence IFGHFEKPVF…IRVIQVIMIR (128 aa). Polar residues-rich tracts occupy residues 332 to 348 and 357 to 366; these read TMSGPINSQTSQSSRQA and NQLNLMQSAA. The disordered stretch occupies residues 332–411; sequence TMSGPINSQT…DGSFHGTTNL (80 aa). Phosphoserine occurs at positions 442 and 451. Residues 480-607 and 596-723 each bind a nucleoside 3',5'-cyclic phosphate; these read ELGL…VVRR and IVLD…LSHR. The 167-residue stretch at 950–1116 folds into the PNPLA domain; that stretch reads LVLGGGGARG…VNNLPGHLWR (167 aa). A GXGXXG motif is present at residues 954–959; that stretch reads GGGARG. The short motif at 981-985 is the GXSXG element; it reads GVSIG. The active-site Nucleophile is the S983. D1103 acts as the Proton acceptor in catalysis. Positions 1103 to 1105 match the DGA/G motif; the sequence is DGG. S1197 is modified (phosphoserine). A disordered region spans residues 1368 to 1468; sequence ERKMDKSTQS…RSSPNNETKN (101 aa). The span at 1374 to 1383 shows a compositional bias: low complexity; that stretch reads STQSSPPTSS. Over residues 1385-1395 the composition is skewed to basic and acidic residues; sequence TDMRGKEEAKH. Positions 1419–1441 are enriched in low complexity; it reads TQTGQEQELQQQQKLQQLQQDQG. Over residues 1446-1459 the composition is skewed to basic and acidic residues; sequence QLVDKDKEEDKENR.

The protein belongs to the NTE family. Interacts with Pka-C3; interaction inhibits the catalytic function of Pka-C3 and the esterase activity of sws.

Its subcellular location is the endoplasmic reticulum membrane. It carries out the reaction a 1-acyl-sn-glycero-3-phosphocholine + H2O = sn-glycerol 3-phosphocholine + a fatty acid + H(+). In terms of biological role, phospholipase B that deacylates intracellular phosphatidylcholine (PtdCho), generating glycerophosphocholine (GroPtdCho). This deacylation occurs at both sn-2 and sn-1 positions of PtdCho. Its specific chemical modification by certain organophosphorus (OP) compounds leads to distal axonopathy. Plays a role in the signaling mechanism between neurons and glia that regulates glia wrapping during development of the adult brain. Essential for membrane lipid homeostasis and cell survival in both neurons and glia of the adult brain. The polypeptide is Neuropathy target esterase sws (Drosophila sechellia (Fruit fly)).